Reading from the N-terminus, the 233-residue chain is Chaperone protein MrkB (233 aa).

A signal peptide spans 1–18; the sequence is MKRIALFFCFIFSFAAHA.

Belongs to the periplasmic pilus chaperone family.

The protein resides in the periplasm. Its function is as follows. Mediates assembly of pili by forming soluble multimeric complexes with pili subunits as an intermediate step in the assembly process. This protein is involved in type 3 pili assembly. In Klebsiella pneumoniae, this protein is Chaperone protein MrkB (mrkB).